Here is a 445-residue protein sequence, read N- to C-terminus: Putative MgpC-like protein MPN_464 (445 aa).

A disordered region spans residues 23–44 (STTVAVQKSDSSGSQGQGTTDN). Over residues 31–43 (SDSSGSQGQGTTD) the composition is skewed to low complexity.

It belongs to the MgpC family.

The polypeptide is Putative MgpC-like protein MPN_464 (Mycoplasma pneumoniae (strain ATCC 29342 / M129 / Subtype 1) (Mycoplasmoides pneumoniae)).